The following is a 341-amino-acid chain: Cell wall mannoprotein PIR1 (341 aa).

The signal sequence occupies residues 1–18 (MQYKKSLVASALVATSLA). Positions 19-63 (AYAPKDPWSTLTPSATYKGGITDYSSTFGIAVEPIATTASSKAKR) are excised as a propeptide. PIR1/2/3 repeat units lie at residues 64–82 (AAAISQIGDGQIQATTKTT), 83–101 (AAAVSQIGDGQIQATTKTK), 102–125 (AAAVSQIGDGQIQATTKTTSAKTT), 126–144 (AAAVSQIGDGQIQATTKTK), 145–163 (AAAVSQIGDGQIQATTKTT), 164–182 (AAAVSQIGDGQIQATTKTT), 183–201 (AAAVSQIGDGQIQATTNTT), and 202–220 (VAPVSQITDGQIQATTLTS).

It belongs to the PIR protein family. Post-translationally, covalently linked to beta-1,3-glucan of the inner cell wall layer via an alkali-sensitive ester linkage between the gamma-carboxyl group of glutamic acids, arising from specific glutamines within the PIR1/2/3 repeats, and hydroxyl groups of glucoses of beta-1,3-glucan chains. O-glycosylated. Extensively O-mannosylated.

Its subcellular location is the secreted. The protein resides in the cell wall. Component of the outer cell wall layer. Required for stability of the cell wall and for optimal growth. Required for resistance against several antifungal and cell wall-perturbing agents and for tolerance to heat shock. This Saccharomyces cerevisiae (strain ATCC 204508 / S288c) (Baker's yeast) protein is Cell wall mannoprotein PIR1 (PIR1).